The primary structure comprises 344 residues: Melanocyte-stimulating hormone receptor (344 aa).

Residues 1–37 (MPMQGAQRKLLGSLNSTPTATSNLGLAANHTGAPCLE) lie on the Extracellular side of the membrane. N29 carries an N-linked (GlcNAc...) asparagine glycan. Residues 38–63 (VSIPDGLFLSLGLVSLVENVLVVAAI) form a helical membrane-spanning segment. At 64 to 72 (AKNRNLHSS) the chain is on the cytoplasmic side. Residues 73–93 (MYCFICCLALSDLLVSGSNML) form a helical membrane-spanning segment. Residues 94-118 (ETAIILLLEAGTLATRASVVQQLHN) lie on the Extracellular side of the membrane. The chain crosses the membrane as a helical span at residues 119–140 (TIDVLTCSSMLCSLCFLGAIAV). Topologically, residues 141–163 (DRYISIFYALRYHSIMTLPRAQR) are cytoplasmic. A helical transmembrane segment spans residues 164-183 (AIAAIWVTSVLSSTLFITYY). Topologically, residues 184 to 191 (DHAAVLLC) are extracellular. The helical transmembrane segment at 192-211 (LVVFFLAMLVLMAVLYVHML) threads the bilayer. Residues 212-240 (ARACQHAQGIIRLHNRQLPAHKGFGLRGA) lie on the Cytoplasmic side of the membrane. The chain crosses the membrane as a helical span at residues 241-266 (ATLTILLGIFFLCWGPFFLHLTLVVF). The Extracellular segment spans residues 267–279 (CPQHLTCNCIFKN). The helical transmembrane segment at 280–300 (FKVFLTLIICNTIIDPLIYAF) threads the bilayer. Over 301–344 (RSQELRRTLKEVLLCSWWPGCGAEGGGDSVWPGSCVTLRGPLPP) the chain is Cytoplasmic. C315 carries the S-palmitoyl cysteine lipid modification.

This sequence belongs to the G-protein coupled receptor 1 family. Interacts with MGRN1, but does not undergo MGRN1-mediated ubiquitination; this interaction competes with GNAS-binding and thus inhibits agonist-induced cAMP production. Interacts with OPN3; the interaction results in a decrease in MC1R-mediated cAMP signaling and ultimately a decrease in melanin production in melanocytes.

The protein resides in the cell membrane. In terms of biological role, receptor for MSH (alpha, beta and gamma) and ACTH. The activity of this receptor is mediated by G proteins which activate adenylate cyclase. Mediates melanogenesis, the production of eumelanin (black/brown) and phaeomelanin (red/yellow), via regulation of cAMP signaling in melanocytes. In Mico argentatus (Silvery marmoset), this protein is Melanocyte-stimulating hormone receptor (MC1R).